We begin with the raw amino-acid sequence, 333 residues long: tRNA dimethylallyltransferase (333 aa).

16 to 23 (GPTASGKT) contributes to the ATP binding site. 18 to 23 (TASGKT) provides a ligand contact to substrate. Interaction with substrate tRNA regions lie at residues 41–44 (DSAL), 165–169 (QRISR), and 253–258 (RCVGYR).

It belongs to the IPP transferase family. In terms of assembly, monomer. Mg(2+) is required as a cofactor.

The catalysed reaction is adenosine(37) in tRNA + dimethylallyl diphosphate = N(6)-dimethylallyladenosine(37) in tRNA + diphosphate. Catalyzes the transfer of a dimethylallyl group onto the adenine at position 37 in tRNAs that read codons beginning with uridine, leading to the formation of N6-(dimethylallyl)adenosine (i(6)A). In Polaromonas sp. (strain JS666 / ATCC BAA-500), this protein is tRNA dimethylallyltransferase.